A 267-amino-acid polypeptide reads, in one-letter code: 3-oxoadipate enol-lactonase 2 (267 aa).

It carries out the reaction (4,5-dihydro-5-oxofuran-2-yl)-acetate + H2O = 3-oxoadipate + H(+). The protein operates within aromatic compound metabolism; beta-ketoadipate pathway; 3-oxoadipate from 5-oxo-4,5-dihydro-2-furylacetate: step 1/1. The sequence is that of 3-oxoadipate enol-lactonase 2 (catD) from Acinetobacter baylyi (strain ATCC 33305 / BD413 / ADP1).